The chain runs to 126 residues: MAILGLGTDIVEIARIEAVIARSGDRLARRVLSDHEWSIWEQHQQPVRFLAKRFAVKEAAAKALGTGIRNGLAFNQFEVYNDELGKPKLRLWGEANLLAERMGVSAIHVTLADERHYACATVIVES.

Residues Asp9 and Glu58 each contribute to the Mg(2+) site.

Belongs to the P-Pant transferase superfamily. AcpS family. It depends on Mg(2+) as a cofactor.

Its subcellular location is the cytoplasm. It carries out the reaction apo-[ACP] + CoA = holo-[ACP] + adenosine 3',5'-bisphosphate + H(+). Transfers the 4'-phosphopantetheine moiety from coenzyme A to a Ser of acyl-carrier-protein. This is Holo-[acyl-carrier-protein] synthase from Klebsiella pneumoniae subsp. pneumoniae (strain ATCC 700721 / MGH 78578).